The sequence spans 310 residues: Uracil phosphoribosyltransferase homolog (310 aa).

Disordered regions lie at residues 1 to 27 and 62 to 89; these read MASE…PSPE and SERD…GNYD. Residues 16 to 25 are compositionally biased toward polar residues; the sequence is RQVNSTSSPS. Ser25 carries the phosphoserine modification. GTP-binding positions include Arg134, Arg143, and 177–180; that span reads EKGN. 5-phospho-alpha-D-ribose 1-diphosphate is bound at residue Arg187. The GTP site is built by Arg204 and Arg233. 239 to 247 lines the 5-phospho-alpha-D-ribose 1-diphosphate pocket; that stretch reads YPILSTGNT. A uracil-binding site is contributed by 300–302; it reads THF.

The protein belongs to the UPRTase family.

The protein localises to the cytoplasm. It is found in the nucleus. This chain is Uracil phosphoribosyltransferase homolog (Uprt), found in Mus musculus (Mouse).